Reading from the N-terminus, the 430-residue chain is Asparagine--tRNA ligase (430 aa).

It belongs to the class-II aminoacyl-tRNA synthetase family. In terms of assembly, homodimer.

Its subcellular location is the cytoplasm. The catalysed reaction is tRNA(Asn) + L-asparagine + ATP = L-asparaginyl-tRNA(Asn) + AMP + diphosphate + H(+). The sequence is that of Asparagine--tRNA ligase from Staphylococcus epidermidis (strain ATCC 35984 / DSM 28319 / BCRC 17069 / CCUG 31568 / BM 3577 / RP62A).